A 477-amino-acid chain; its full sequence is Cytochrome P450 716A1 (477 aa).

Residues 2-22 traverse the membrane as a helical segment; that stretch reads YMAIMIILFLSSILLSLLLLL. A heme-binding site is contributed by C424.

Belongs to the cytochrome P450 family. Heme is required as a cofactor.

It is found in the membrane. Possesses triterpene oxidizing activity. Catalyzes the C28 hydroxylation of alpha-amyrin, beta-amyrin, and lupeol, producing uvaol, erythrodiol, and betulin, respectively. Catalyzes the C28 carboxylation of alpha- and beta-amyrin. The polypeptide is Cytochrome P450 716A1 (Arabidopsis thaliana (Mouse-ear cress)).